We begin with the raw amino-acid sequence, 558 residues long: Potassium-transporting ATPase potassium-binding subunit (558 aa).

12 helical membrane passes run 1 to 21, 66 to 86, 127 to 147, 166 to 186, 245 to 265, 281 to 301, 327 to 347, 354 to 374, 377 to 397, 416 to 436, 482 to 502, and 531 to 551; these read MEIILFLTMMVMITYVFSGYL, FNGFMGFITFVLLIVQQWLFL, MIVMTYLMFTSSASGYAVCIA, IVRFIVRVLLPLSCLISILLM, IWSNFIEMGSMMLLPMSMLFL, ALILFVAMFFIFIAILTLTMW, FGAGLSALFTVITTAFTTGSV, LTPIGGLGPMVLMMLNVVFGG, VGLMNLLIFVLLTVFICSLMV, IVLVFLIHPILILVFSALAFM, ISTGIIMLLSRYIPIILQLMI, and IVFIVLLSGLTFIPVLLLGPI.

The protein belongs to the KdpA family. The system is composed of three essential subunits: KdpA, KdpB and KdpC.

The protein localises to the cell membrane. Its function is as follows. Part of the high-affinity ATP-driven potassium transport (or Kdp) system, which catalyzes the hydrolysis of ATP coupled with the electrogenic transport of potassium into the cytoplasm. This subunit binds the extracellular potassium ions and delivers the ions to the membrane domain of KdpB through an intramembrane tunnel. The sequence is that of Potassium-transporting ATPase potassium-binding subunit from Staphylococcus aureus (strain USA300).